The following is a 317-amino-acid chain: Melanocyte-stimulating hormone receptor (317 aa).

Over 1-37 (MPVQGSQRRLLGSLNSTPTATPHLGLAANQTGARCLE) the chain is Extracellular. N-linked (GlcNAc...) asparagine glycosylation occurs at Asn29. Residues 38–63 (VSVPDGLFLSLGLVSLVENVLVVTAI) form a helical membrane-spanning segment. The Cytoplasmic segment spans residues 64 to 72 (AKNRNLHSP). A helical transmembrane segment spans residues 73–93 (MYCFICCLALSDLLVSGSNML). The Extracellular portion of the chain corresponds to 94–118 (ETAVTLLLEAGALAARAAVVQQLDN). Residues 119–140 (VIDVITCSSMLSSLCFLGAIAV) traverse the membrane as a helical segment. The Cytoplasmic segment spans residues 141 to 163 (DRYISIFYALRYHSIVTLPRARR). The chain crosses the membrane as a helical span at residues 164–183 (AVAAIWVASVLFSTLFIAYY). Over 184-191 (DHAAVLLC) the chain is Extracellular. Residues 192-211 (LVIFFLAMLVLMAVLYVHML) form a helical membrane-spanning segment. Over 212 to 240 (ARACQHAQGIARLHKRQRLAHQGFGLKGA) the chain is Cytoplasmic. A helical transmembrane segment spans residues 241–266 (ATLTILLGIFFLCWGPFFLHLTLIVL). The Extracellular portion of the chain corresponds to 267-279 (CPQHPTCSCIFKN). The chain crosses the membrane as a helical span at residues 280–300 (FNLFLALIICNAIIDPLIYAF). Residues 301-317 (RSQELRRTLKEVLLCSW) lie on the Cytoplasmic side of the membrane. Cys315 carries S-palmitoyl cysteine lipidation.

This sequence belongs to the G-protein coupled receptor 1 family. As to quaternary structure, interacts with MGRN1, but does not undergo MGRN1-mediated ubiquitination; this interaction competes with GNAS-binding and thus inhibits agonist-induced cAMP production. Interacts with OPN3; the interaction results in a decrease in MC1R-mediated cAMP signaling and ultimately a decrease in melanin production in melanocytes.

Its subcellular location is the cell membrane. In terms of biological role, receptor for MSH (alpha, beta and gamma) and ACTH. The activity of this receptor is mediated by G proteins which activate adenylate cyclase. Mediates melanogenesis, the production of eumelanin (black/brown) and phaeomelanin (red/yellow), via regulation of cAMP signaling in melanocytes. The sequence is that of Melanocyte-stimulating hormone receptor (MC1R) from Papio hamadryas (Hamadryas baboon).